The sequence spans 452 residues: Trigger factor (452 aa).

Residues 171–256 enclose the PPIase FKBP-type domain; it reads GDRVTISFKG…ATKVEAPQDT (86 aa).

It belongs to the FKBP-type PPIase family. Tig subfamily.

The protein resides in the cytoplasm. It carries out the reaction [protein]-peptidylproline (omega=180) = [protein]-peptidylproline (omega=0). Functionally, involved in protein export. Acts as a chaperone by maintaining the newly synthesized protein in an open conformation. Functions as a peptidyl-prolyl cis-trans isomerase. The protein is Trigger factor of Rhodopseudomonas palustris (strain HaA2).